Reading from the N-terminus, the 230-residue chain is Ly6/PLAUR domain-containing protein 8 (230 aa).

Residues 1–20 (MKSFLFAGIVVVLTVAAVDT) form the signal peptide. Residues N37, N44, N74, N77, N90, N106, N110, N132, N137, N156, N168, N181, and N197 are each glycosylated (N-linked (GlcNAc...) asparagine). In terms of domain architecture, UPAR/Ly6 spans 125-172 (CPACYGNNETSCNETRKCYGERCVSIIAEFTNETKTLVLKGCSNVSIS). S211 carries GPI-anchor amidated serine lipidation. A propeptide spans 212–230 (QASFTPLALASILLLSLLL) (removed in mature form).

This sequence belongs to the CNF-like-inhibitor family. Highly N-glycosylated. Not O-glycosylated. Post-translationally, GPI-anchored. The GPI-anchor is cleaved, leading to secretion into the colonic lumen.

It is found in the cell membrane. It localises to the secreted. Its function is as follows. Secreted protein specifically required to prevent invasion of Gram-negative bacteria in the inner mucus layer of the colon epithelium, a portion of the large intestine which is free of commensal microbiota. Prevents invasion of flagellated microbiota by binding to the flagellum of bacteria, such as P.mirabilis, thereby inhibiting bacterial motility in the intestinal lumen. Segregation of intestinal bacteria and epithelial cells in the colon is required to preserve intestinal homeostasis. The protein is Ly6/PLAUR domain-containing protein 8 (LYPD8) of Bos taurus (Bovine).